Consider the following 287-residue polypeptide: Inositol diphosphatase siw14 (287 aa).

Residues 85–256 (NFGVVYPGII…LNDLKRYISD (172 aa)) enclose the Tyrosine-protein phosphatase domain. 2 positions are modified to phosphoserine: S156 and S159. C189 (phosphocysteine intermediate) is an active-site residue.

Belongs to the protein-tyrosine phosphatase family. Atypical dual-specificity phosphatase Siw14-like subfamily.

Its subcellular location is the cytoplasm. The protein resides in the nucleus. It catalyses the reaction 5-diphospho-1D-myo-inositol 1,2,3,4,6-pentakisphosphate + H2O = 1D-myo-inositol hexakisphosphate + phosphate + H(+). The catalysed reaction is 1-diphospho-1D-myo-inositol 2,3,4,5,6-pentakisphosphate + H2O = 1D-myo-inositol hexakisphosphate + phosphate + H(+). The enzyme catalyses 1,5-bis(diphospho)-1D-myo-inositol 2,3,4,6-tetrakisphosphate + H2O = 1-diphospho-1D-myo-inositol 2,3,4,5,6-pentakisphosphate + phosphate + 2 H(+). Activity is inhibited by the reaction product inorganic phosphate and by sulfate (a phosphate mimetic). Not inhibited by magnesium. Cleaves the beta-phosphate at the 1- and 5-position of soluble inositol pyrophosphates. Has exopolyphosphatase activity in vitro but does not appear to contribute to the homeostasis of cellular polyphosphate. This Schizosaccharomyces pombe (strain 972 / ATCC 24843) (Fission yeast) protein is Inositol diphosphatase siw14.